The following is a 241-amino-acid chain: MFVDSMEEHKLWVIVPAAGVGSRMGGERPKQYLKLIDRSVLEHTLDRLLSAPGISQIYLPLHPQDKWWPEIADKYTGKVISVAGGEERSTSVLNALEKIESHAAIEDWVLVHDVARPCFRISDISNLMRLLWNTQPGGLLGVPVADTVKRTNEKGEVLATVSRANLWRAYTPQMFRFGALLSALRQGSEKGVHITDEASAIEAQGLKPVMVEGHSDNIKITHPQDLPLAEIFLRRIMQEEE.

This sequence belongs to the IspD/TarI cytidylyltransferase family. IspD subfamily.

The catalysed reaction is 2-C-methyl-D-erythritol 4-phosphate + CTP + H(+) = 4-CDP-2-C-methyl-D-erythritol + diphosphate. It participates in isoprenoid biosynthesis; isopentenyl diphosphate biosynthesis via DXP pathway; isopentenyl diphosphate from 1-deoxy-D-xylulose 5-phosphate: step 2/6. Functionally, catalyzes the formation of 4-diphosphocytidyl-2-C-methyl-D-erythritol from CTP and 2-C-methyl-D-erythritol 4-phosphate (MEP). The chain is 2-C-methyl-D-erythritol 4-phosphate cytidylyltransferase from Hahella chejuensis (strain KCTC 2396).